The chain runs to 391 residues: ATP-sensitive inward rectifier potassium channel 1 (391 aa).

Residues 1–77 lie on the Cytoplasmic side of the membrane; it reads MNASSRNVFD…IWTTVLDLKW (77 aa). The residue at position 44 (S44) is a Phosphoserine; by SGK1. A helical transmembrane segment spans residues 78–102; that stretch reads RYKMTIFITAFLGSWFFFGLLWYAV. Topologically, residues 103–127 are extracellular; the sequence is AYIHKDLPEFHPSANHTPCVENING. N-linked (GlcNAc...) asparagine glycosylation is present at N117. Residues 128 to 139 constitute an intramembrane region (helical; Pore-forming); sequence LTSAFLFSLETQ. The pore-forming intramembrane region spans 140-146; it reads VTIGYGF. The short motif at 141–146 is the Selectivity filter element; it reads TIGYGF. At 147–155 the chain is on the extracellular side; that stretch reads RCVTEQCAT. The helical transmembrane segment at 156–177 threads the bilayer; it reads AIFLLIFQSILGVIINSFMCGA. The Cytoplasmic portion of the chain corresponds to 178–391; sequence ILAKISRPKK…EVNETDDTKM (214 aa). A polyphosphoinositide (PIP2)-binding region spans residues 180–207; it reads AKISRPKKRAKTITFSKNAVISKRGGKL. Position 223–230 (223–230) interacts with ATP; sequence GSHIYGKL.

The protein belongs to the inward rectifier-type potassium channel (TC 1.A.2.1) family. KCNJ1 subfamily. In terms of assembly, interacts with SGK1 and SLC9A3R2/NHERF2. In terms of processing, phosphorylation at Ser-44 by SGK1 is necessary for its expression at the cell membrane. In the kidney and pancreatic islets. Lower levels in skeletal muscle, pancreas, spleen, brain, heart and liver.

The protein resides in the cell membrane. It carries out the reaction K(+)(in) = K(+)(out). Inhibited by WNK3. Activated by phosphatidylinositol 4,5 biphosphate (PtdIns(4,5)P2). In terms of biological role, inward rectifier potassium channels are characterized by a greater tendency to allow potassium to flow into the cell rather than out of it. Their voltage dependence is regulated by the concentration of extracellular potassium; as external potassium is raised, the voltage range of the channel opening shifts to more positive voltages. The inward rectification is mainly due to the blockage of outward current by internal magnesium. This channel is activated by internal ATP and can be blocked by external barium. In the kidney, probably plays a major role in potassium homeostasis. The protein is ATP-sensitive inward rectifier potassium channel 1 (KCNJ1) of Homo sapiens (Human).